A 5571-amino-acid polypeptide reads, in one-letter code: Polyketide synthase GfsB (5571 aa).

The segment at 1 to 27 (MSVPPPGATPSRTSRTKGLKDRPRMEN) is disordered. A compositionally biased stretch (basic and acidic residues) spans 18 to 27 (GLKDRPRMEN). Residues 57–483 (QEPVAIIGMS…GTNAHVIIEQ (427 aa)) form the Ketosynthase family 3 (KS3) 1 domain. Module regions lie at residues 57–2148 (QEPV…RDTL), 2167–3728 (DEPL…GSQV), and 3746–5485 (DEPV…HTHL). Active-site for beta-ketoacyl synthase 1 activity residues include cysteine 230, histidine 365, and histidine 405. Residues 485 to 518 (PAIEGTGLGDDAPPTAEHPEERTPADGGPAPQPV) are disordered. The region spanning 611-926 (FVFPGQGSQW…LRSLAEAYAH (316 aa)) is the Malonyl-CoA:ACP transacylase (MAT) 1 domain. The N-terminal hotdog fold 1 stretch occupies residues 976–1109 (HPLLAAATSL…GYLAVGAHEP (134 aa)). One can recognise a PKS/mFAS DH 1 domain in the interval 976–1264 (HPLLAAATSL…LRPLATNQAP (289 aa)). The active-site Proton acceptor; for dehydratase activity 1 is the histidine 1008. The C-terminal hotdog fold 1 stretch occupies residues 1122–1264 (ATPLDVTDLY…LRPLATNQAP (143 aa)). Residue aspartate 1183 is the Proton donor; for dehydratase activity 1 of the active site. One can recognise an Enoyl reductase (ER) domain in the interval 1478 to 1777 (GTLDHLTLIP…QARHIGKIVL (300 aa)). The region spanning 1787 to 1966 (GTVLVTGATG…TSLAWGLWEE (180 aa)) is the Ketoreductase (KR) 1 domain. The Carrier 1 domain maps to 2073 to 2148 (RIVNDLVRDH…ELAAHLRDTL (76 aa)). The residue at position 2108 (serine 2108) is an O-(pantetheine 4'-phosphoryl)serine. Residues 2167–2593 (DEPLAVVAMS…GTNAHVILEQ (427 aa)) form the Ketosynthase family 3 (KS3) 2 domain. Active-site for beta-ketoacyl synthase 2 activity residues include cysteine 2340, histidine 2475, and histidine 2515. The Malonyl-CoA:ACP transacylase (MAT) 2 domain maps to 2710-3016 (VFSGQGSQRP…AAVALQRGNR (307 aa)). In terms of domain architecture, Ketoreductase (KR) 2 spans 3373 to 3551 (GTVLVTGGTG…VSVAWGPWAE (179 aa)). The Carrier 2 domain maps to 3653–3728 (TALLDLVRGQ…ALAEYVGSQV (76 aa)). O-(pantetheine 4'-phosphoryl)serine is present on serine 3688. The Ketosynthase family 3 (KS3) 3 domain maps to 3746-4172 (DEPVAIIGMS…GTNAHVILEQ (427 aa)). Catalysis depends on for beta-ketoacyl synthase 3 activity residues cysteine 3919, histidine 4054, and histidine 4094. The Malonyl-CoA:ACP transacylase (MAT) 3 domain occupies 4279 to 4601 (FLFSGQGSQR…ATAHVNGVQP (323 aa)). An N-terminal hotdog fold 2 region spans residues 4649 to 4774 (HPLLAGVVDL…GALTVAEAVD (126 aa)). The region spanning 4649–4931 (HPLLAGVVDL…TRPIAAGQLA (283 aa)) is the PKS/mFAS DH 2 domain. The active-site Proton acceptor; for dehydratase activity 2 is histidine 4681. The tract at residues 4787–4931 (AIEVELDDPY…TRPIAAGQLA (145 aa)) is C-terminal hotdog fold 2. Aspartate 4848 acts as the Proton donor; for dehydratase activity 2 in catalysis. Residues 5134–5306 (LLVTGASGVL…TSLSWGLWAE (173 aa)) form the Ketoreductase (KR) 3 domain. A Carrier 3 domain is found at 5410–5485 (RMVLDLVRDR…ALARYLHTHL (76 aa)). Serine 5445 carries the post-translational modification O-(pantetheine 4'-phosphoryl)serine.

Pantetheine 4'-phosphate is required as a cofactor.

It participates in antibiotic biosynthesis. In terms of biological role, second protein in the synthesis of the 16-membered macrolide antibiotics FD-891 and FD-892. Composed of 3 modules. Modifies the product of GfsA by multiple rounds of addition of malonyl-CoA or methylmalonyl-CoA and other modifications to help generate the final products. The sequence is that of Polyketide synthase GfsB from Streptomyces halstedii.